The chain runs to 196 residues: Probable malonic semialdehyde reductase RutE (196 aa).

Belongs to the nitroreductase family. HadB/RutE subfamily. FMN is required as a cofactor.

It carries out the reaction 3-hydroxypropanoate + NADP(+) = 3-oxopropanoate + NADPH + H(+). Functionally, may reduce toxic product malonic semialdehyde to 3-hydroxypropionic acid, which is excreted. The chain is Probable malonic semialdehyde reductase RutE from Shigella dysenteriae serotype 1 (strain Sd197).